The following is a 73-amino-acid chain: uncharacterized protein (73 aa).

The HTH deoR-type domain maps to 8 to 63 (MLTRIKSVYMFIQEKGLVTTQELVDEFGITPRTIQRDLNVLAYNDLVHSPSRGKWE). The H-T-H motif DNA-binding region spans 25-44 (VTTQELVDEFGITPRTIQRD).

This is an uncharacterized protein from Bacillus subtilis (strain 168).